The chain runs to 237 residues: MTVLPALPPLDDLETLNVHLETLSAENRVCWALQHAPDHPALSSSFGAQSAVMLHLLTRFAPDIPVILVDTGYLFPETYRFADTLTERLKLNLKVYQPLRSGTWTEARHGRLWEQGIDGINQYNTLHKVEPMRRALEELQVGTWFTGLRRGQSSTRTQTSIVQRRDERYKISPIVDWTDRDIWEYMKHHDLPYHPLWEQGYVSIGDIHTTRPLEPDMREEDTRFFGFKRECGIHENI.

Cys-231 functions as the Nucleophile; cysteine thiosulfonate intermediate in the catalytic mechanism.

It belongs to the PAPS reductase family. CysH subfamily.

Its subcellular location is the cytoplasm. The enzyme catalyses [thioredoxin]-disulfide + sulfite + adenosine 3',5'-bisphosphate + 2 H(+) = [thioredoxin]-dithiol + 3'-phosphoadenylyl sulfate. It functions in the pathway sulfur metabolism; hydrogen sulfide biosynthesis; sulfite from sulfate: step 3/3. Catalyzes the formation of sulfite from phosphoadenosine 5'-phosphosulfate (PAPS) using thioredoxin as an electron donor. The chain is Phosphoadenosine 5'-phosphosulfate reductase from Xylella fastidiosa (strain M12).